The primary structure comprises 302 residues: Aliphatic sulfonates import ATP-binding protein SsuB (302 aa).

Positions 30–57 (PATADAQHTADAQHTADAQHTADAQHTA) are enriched in low complexity. The disordered stretch occupies residues 30–65 (PATADAQHTADAQHTADAQHTADAQHTAETAETRGA). The ABC transporter domain maps to 70-284 (IRIRGLRRTF…RRTDPAFDRL (215 aa)). ATP is bound at residue 102–109 (GRSGSGKS).

It belongs to the ABC transporter superfamily. Aliphatic sulfonates importer (TC 3.A.1.17.2) family. As to quaternary structure, the complex is composed of two ATP-binding proteins (SsuB), two transmembrane proteins (SsuC) and a solute-binding protein (SsuA).

Its subcellular location is the cell membrane. It carries out the reaction ATP + H2O + aliphatic sulfonate-[sulfonate-binding protein]Side 1 = ADP + phosphate + aliphatic sulfonateSide 2 + [sulfonate-binding protein]Side 1.. Functionally, part of the ABC transporter complex SsuABC involved in aliphatic sulfonates import. Responsible for energy coupling to the transport system. The protein is Aliphatic sulfonates import ATP-binding protein SsuB of Frankia casuarinae (strain DSM 45818 / CECT 9043 / HFP020203 / CcI3).